The following is a 154-amino-acid chain: Pro-corazonin (154 aa).

Residues 1 to 19 (MLRLLLLPLFLFTLSMCMG) form the signal peptide. Pyrrolidone carboxylic acid is present on glutamine 20. Asparagine 30 bears the Asparagine amide mark. Residues 70–154 (LERCLSQLQR…SAEPNVFGKH (85 aa)) constitute a propeptide that is removed on maturation. The segment at 91 to 119 (DFNANRVDPDPENSAHPRLSNSNGENVLY) is disordered. Polar residues predominate over residues 109-119 (LSNSNGENVLY).

The protein belongs to the corazonin family. From late embryo to larva, expression is consistently detected in three neuronal groups: dorso-lateral neurons (DL), dorso-medial neurons (DM), and neurons in the ventral nerve cord (vCrz). Both the vCrz and DM groups die via programmed cell death during metamorphosis, whereas the DL neurons persist to adulthood. In adults, expression is seen in a cluster of six to eight neurons per lobe in the pars lateralis (DLP), in numerous neuronal cells in the optic lobes, and in a novel group of four abdominal ganglionic neurons present only in males (ms-aCrz). Projections of the ms-aCrz neurons terminate within the ventral nerve cord, implying a role as interneurons. Terminals of the DLP neurons are found in the retrocerebral complex that produces juvenile hormone and adipokinetic hormone, located in the vicinity of terminals emanating from PDF-containing pacemaking neurons.

The protein resides in the secreted. Its function is as follows. Cardioactive peptide. Corazonin is probably involved in the physiological regulation of the heart beat. Clock (Clk) and cycle (cyc) proteins negatively regulate Crz transcription in a cell-specific manner. This chain is Pro-corazonin (Crz), found in Drosophila melanogaster (Fruit fly).